The chain runs to 364 residues: Eukaryotic translation initiation factor 3 subunit H (364 aa).

The 150-residue stretch at 13-162 (VQVDALVAIK…LRAYRLSPSF (150 aa)) folds into the MPN domain.

This sequence belongs to the eIF-3 subunit H family. In terms of assembly, component of the eukaryotic translation initiation factor 3 (eIF-3) complex.

The protein localises to the cytoplasm. Component of the eukaryotic translation initiation factor 3 (eIF-3) complex, which is involved in protein synthesis of a specialized repertoire of mRNAs and, together with other initiation factors, stimulates binding of mRNA and methionyl-tRNAi to the 40S ribosome. The eIF-3 complex specifically targets and initiates translation of a subset of mRNAs involved in cell proliferation. The sequence is that of Eukaryotic translation initiation factor 3 subunit H from Phaeosphaeria nodorum (strain SN15 / ATCC MYA-4574 / FGSC 10173) (Glume blotch fungus).